The primary structure comprises 178 residues: MQKVRLQGSVAYVFKVFTESLKKMEIDPVAGAINEKTALVAVKYKHFAEKITADINKELWNMKIKDGKLFLVGMKELVDEDLREVNSKILSKLKKFGIDAGAYVTDDGDAVIMVSLNDVIIRILEKTLQETKVRAGNHMRNLRVKFGNDDKYAYTVIYSRNSKNESVVKDVEEVLKDE.

This is an uncharacterized protein from Sulfolobus islandicus filamentous virus (isolate Iceland/Hveragerdi) (SIFV).